The sequence spans 276 residues: Palmitoyltransferase ZDHHC22 (276 aa).

The Cytoplasmic segment spans residues 1 to 9 (MGKLKLLNT). Residues 10–30 (IAPAYFYAATVVTFALHFLLF) traverse the membrane as a helical segment. Residues 31–45 (TPTIFQSSDVTINPA) lie on the Lumenal side of the membrane. A helical membrane pass occupies residues 46–66 (MLAHISIFLFLMGNALGNYIM). Topologically, residues 67–131 (TIRNPSESAN…NCIGNRNMRY (65 aa)) are cytoplasmic. One can recognise a DHHC domain in the interval 101 to 137 (HFCKVCKKVILKRDHHCFFTGNCIGNRNMRYFIMFSI). The active-site S-palmitoyl cysteine intermediate is the cysteine 117. The helical transmembrane segment at 132–152 (FIMFSIYTSSSCLYSLVIGVA) threads the bilayer. Over 153-165 (YLTIEYSISFENP) the chain is Lumenal. The helical transmembrane segment at 166–186 (LTFLTLLPLSTGYFFLGLISG) threads the bilayer. At 187-188 (LQ) the chain is on the cytoplasmic side. Residues 189-209 (FFLVIMLYIWLGIGLVSVGFC) form a helical membrane-spanning segment. Residues 210 to 276 (CQQLLLVARG…WQVYHDHKHD (67 aa)) lie on the Lumenal side of the membrane.

The protein belongs to the DHHC palmitoyltransferase family.

The protein localises to the endoplasmic reticulum membrane. Its subcellular location is the golgi apparatus membrane. The enzyme catalyses L-cysteinyl-[protein] + hexadecanoyl-CoA = S-hexadecanoyl-L-cysteinyl-[protein] + CoA. Functionally, palmitoyltransferase that could catalyze the addition of palmitate onto various protein substrates and be involved in a variety of cellular processes. The chain is Palmitoyltransferase ZDHHC22 (zdhhc22) from Danio rerio (Zebrafish).